We begin with the raw amino-acid sequence, 396 residues long: Actin-related protein 6 (396 aa).

N-acetylthreonine is present on threonine 2. At lysine 260 the chain carries N6-acetyllysine.

This sequence belongs to the actin family. ARP6 subfamily. In terms of assembly, component of the chromatin-remodeling SRCAP complex composed of at least SRCAP, DMAP1, RUVBL1, RUVBL2, ACTL6A, YEATS4, ACTR6 and ZNHIT1. Interacts with CBX1, CBX3 and CBX5.

Its subcellular location is the cytoplasm. The protein resides in the cytoskeleton. The protein localises to the nucleus. It localises to the nucleolus. Its function is as follows. Required for formation and/or maintenance of proper nucleolar structure and function. Plays a dual role in the regulation of ribosomal DNA (rDNA) transcription. In the presence of high glucose, maintains active rDNA transcription through H2A.Z deposition and under glucose starvation, is required for the repression of rDNA transcription, and this function may be independent of H2A.Z. In Homo sapiens (Human), this protein is Actin-related protein 6 (ACTR6).